The primary structure comprises 316 residues: Ribosomal RNA small subunit methyltransferase H (316 aa).

Residues 35–37 (AGH), Asp-55, Phe-84, Asp-105, and Gln-112 contribute to the S-adenosyl-L-methionine site.

Belongs to the methyltransferase superfamily. RsmH family.

It localises to the cytoplasm. The catalysed reaction is cytidine(1402) in 16S rRNA + S-adenosyl-L-methionine = N(4)-methylcytidine(1402) in 16S rRNA + S-adenosyl-L-homocysteine + H(+). Its function is as follows. Specifically methylates the N4 position of cytidine in position 1402 (C1402) of 16S rRNA. This is Ribosomal RNA small subunit methyltransferase H from Streptococcus mutans serotype c (strain ATCC 700610 / UA159).